The primary structure comprises 170 residues: Adenine phosphoribosyltransferase (170 aa).

Belongs to the purine/pyrimidine phosphoribosyltransferase family. In terms of assembly, homodimer.

The protein localises to the cytoplasm. It catalyses the reaction AMP + diphosphate = 5-phospho-alpha-D-ribose 1-diphosphate + adenine. It functions in the pathway purine metabolism; AMP biosynthesis via salvage pathway; AMP from adenine: step 1/1. Catalyzes a salvage reaction resulting in the formation of AMP, that is energically less costly than de novo synthesis. The protein is Adenine phosphoribosyltransferase of Streptococcus pneumoniae (strain Taiwan19F-14).